The sequence spans 121 residues: Class I hydrophobin 2 (121 aa).

The signal sequence occupies residues 1–18; that stretch reads MQFTTIVMTLAAAVAVTA. Cystine bridges form between Cys52–Cys101, Cys60–Cys94, Cys61–Cys79, and Cys102–Cys116. The N-linked (GlcNAc...) asparagine glycan is linked to Asn83.

Belongs to the fungal hydrophobin family. Self-assembles to form functional amyloid fibrils called rodlets. Self-assembly into fibrillar rodlets occurs spontaneously at hydrophobic:hydrophilic interfaces and the rodlets further associate laterally to form amphipathic monolayers. Expressed in conidia and aerial hyphae.

The protein resides in the secreted. It localises to the cell wall. Aerial growth, conidiation, and dispersal of filamentous fungi in the environment rely upon a capability of their secreting small amphipathic proteins called hydrophobins (HPBs) with low sequence identity. Class I can self-assemble into an outermost layer of rodlet bundles on aerial cell surfaces, conferring cellular hydrophobicity that supports fungal growth, development and dispersal; whereas Class II form highly ordered films at water-air interfaces through intermolecular interactions but contribute nothing to the rodlet structure. Hcf-2 is a class I hydrophobin that is not necessary for the development of hyphae or conidia but contributes to cell surface hydrophobicity. The protein is Class I hydrophobin 2 of Passalora fulva (Tomato leaf mold).